Consider the following 456-residue polypeptide: MNVIEKLNSIQNKEMTAKENVENFIKVIDEKNEELNIFLEVNKESALKQAEAIDEKIANGEKVGFLSGLVFGIKANINVEDYIISAASKTLDNYFGSYNATVIDKILAQDGIILGITNMDEFAAGSSTETSCFGPTQNPAAPGRIPGGSSGGSAAAVAAEMCDIALGSDTGGSIRNPASHCGVVGFKPTYGAVSRQGLLDLSMSLDQIGPLSNDTSGIALALNAISDYDETECTTLHGKRPDFTSALEEKSLEGMKIAVCKEFIDVTDAEINVAVNKAIHKLVEAGAELVEVSFDNIDLCLPTYYLINYVEFFSATRKYDGRDYGYRIEDVCGEEVLRRIEIGSYISQKEYSGKFYKKALQARSLIRDEINAMLENVDLIVGPTVPKLPHKIGDELTPMEMYAYDVLTVIANLAGIPAGSIKAGEVDGIPVGLQIQAKPLDDLKIIKAMSVFENEN.

Residues K74 and S149 each act as charge relay system in the active site. The Acyl-ester intermediate role is filled by S173.

Belongs to the amidase family. GatA subfamily. In terms of assembly, heterotrimer of A, B and C subunits.

It carries out the reaction L-glutamyl-tRNA(Gln) + L-glutamine + ATP + H2O = L-glutaminyl-tRNA(Gln) + L-glutamate + ADP + phosphate + H(+). Functionally, allows the formation of correctly charged Gln-tRNA(Gln) through the transamidation of misacylated Glu-tRNA(Gln) in organisms which lack glutaminyl-tRNA synthetase. The reaction takes place in the presence of glutamine and ATP through an activated gamma-phospho-Glu-tRNA(Gln). This Methanobrevibacter smithii (strain ATCC 35061 / DSM 861 / OCM 144 / PS) protein is Glutamyl-tRNA(Gln) amidotransferase subunit A.